The chain runs to 157 residues: Myosin regulatory light chain, striated adductor muscle (157 aa).

EF-hand domains follow at residues 16–51 and 85–120; these read KQIQ…LGRA and DSEE…MGDN. Ca(2+)-binding residues include aspartate 29, aspartate 31, aspartate 33, and aspartate 40.

In molluscan muscle, calcium regulation is associated with myosin rather than with actin. Muscle myosin contains two types of light chains: the catalytic light chain, essential for ATPase activity, and the regulatory light chain, a calcium-binding protein responsible for Ca(2+) dependent binding and Ca(2+) dependent Mg-ATPase activity. In Argopecten irradians (Bay scallop), this protein is Myosin regulatory light chain, striated adductor muscle.